The chain runs to 253 residues: Precorrin-4 C(11)-methyltransferase (253 aa).

This sequence belongs to the precorrin methyltransferase family.

The enzyme catalyses precorrin-4 + S-adenosyl-L-methionine = precorrin-5 + S-adenosyl-L-homocysteine. The protein operates within cofactor biosynthesis; adenosylcobalamin biosynthesis; cob(II)yrinate a,c-diamide from precorrin-2 (aerobic route): step 4/10. Its function is as follows. Catalyzes the methylation of C-11 in precorrin-4 to form precorrin-5. The protein is Precorrin-4 C(11)-methyltransferase (cobM) of Sinorhizobium sp.